We begin with the raw amino-acid sequence, 902 residues long: HTH-type transcriptional regulator MalT (902 aa).

An ATP-binding site is contributed by 39 to 46 (SPAGYGKT). The region spanning 830–895 (ELIRTSPLTQ…DAVQHAQQLL (66 aa)) is the HTH luxR-type domain. A DNA-binding region (H-T-H motif) is located at residues 854 to 873 (NEQIAGELAVAATTIKTHIR).

This sequence belongs to the MalT family. In terms of assembly, monomer in solution. Oligomerizes to an active state in the presence of the positive effectors ATP and maltotriose.

Its activity is regulated as follows. Activated by ATP and maltotriose, which are both required for DNA binding. In terms of biological role, positively regulates the transcription of the maltose regulon whose gene products are responsible for uptake and catabolism of malto-oligosaccharides. Specifically binds to the promoter region of its target genes, recognizing a short DNA motif called the MalT box. The sequence is that of HTH-type transcriptional regulator MalT from Salmonella dublin (strain CT_02021853).